The following is a 309-amino-acid chain: Glutaminase (309 aa).

Residues S65, N117, E162, N169, Y193, Y245, and V263 each coordinate substrate.

It belongs to the glutaminase family. Homotetramer.

It catalyses the reaction L-glutamine + H2O = L-glutamate + NH4(+). The chain is Glutaminase from Bacillus cereus (strain ATCC 10987 / NRS 248).